Here is a 240-residue protein sequence, read N- to C-terminus: Probable alpha-aspartyl dipeptidase (240 aa).

Catalysis depends on charge relay system residues Ser-125, Asp-140, and His-162.

It belongs to the peptidase S51 family.

Its subcellular location is the cytoplasm. It carries out the reaction Dipeptidase E catalyzes the hydrolysis of dipeptides Asp-|-Xaa. It does not act on peptides with N-terminal Glu, Asn or Gln, nor does it cleave isoaspartyl peptides.. Its function is as follows. Hydrolyzes dipeptides containing N-terminal aspartate residues. This is Probable alpha-aspartyl dipeptidase from Drosophila melanogaster (Fruit fly).